Here is a 539-residue protein sequence, read N- to C-terminus: CTP synthase (539 aa).

Positions 1 to 267 (MTKFIFVTGG…DDLVIKRLDL (267 aa)) are amidoligase domain. Residue Ser-13 coordinates CTP. Ser-13 serves as a coordination point for UTP. 14 to 19 (SLGKGI) lines the ATP pocket. Position 54 (Tyr-54) interacts with L-glutamine. Position 71 (Asp-71) interacts with ATP. Residues Asp-71 and Glu-141 each coordinate Mg(2+). CTP-binding positions include 148–150 (DIE), 188–193 (KTKPTQ), and Lys-224. Residues 188-193 (KTKPTQ) and Lys-224 contribute to the UTP site. ATP is bound at residue 240-242 (RDA). Residues 293–535 (TIGLVGKYVS…IEAANKYKEA (243 aa)) form the Glutamine amidotransferase type-1 domain. Gly-355 serves as a coordination point for L-glutamine. Catalysis depends on Cys-382, which acts as the Nucleophile; for glutamine hydrolysis. L-glutamine contacts are provided by residues 383–386 (LGMQ), Glu-406, and Arg-463. Active-site residues include His-508 and Glu-510.

This sequence belongs to the CTP synthase family. As to quaternary structure, homotetramer.

The enzyme catalyses UTP + L-glutamine + ATP + H2O = CTP + L-glutamate + ADP + phosphate + 2 H(+). The catalysed reaction is L-glutamine + H2O = L-glutamate + NH4(+). It catalyses the reaction UTP + NH4(+) + ATP = CTP + ADP + phosphate + 2 H(+). It functions in the pathway pyrimidine metabolism; CTP biosynthesis via de novo pathway; CTP from UDP: step 2/2. Allosterically activated by GTP, when glutamine is the substrate; GTP has no effect on the reaction when ammonia is the substrate. The allosteric effector GTP functions by stabilizing the protein conformation that binds the tetrahedral intermediate(s) formed during glutamine hydrolysis. Inhibited by the product CTP, via allosteric rather than competitive inhibition. Functionally, catalyzes the ATP-dependent amination of UTP to CTP with either L-glutamine or ammonia as the source of nitrogen. Regulates intracellular CTP levels through interactions with the four ribonucleotide triphosphates. The chain is CTP synthase from Staphylococcus carnosus (strain TM300).